The following is a 293-amino-acid chain: DegV domain-containing protein MG326 homolog (293 aa).

In terms of domain architecture, DegV spans 3 to 289; the sequence is TAIITDSTAS…IDAFSISLLL (287 aa). Residues threonine 62 and serine 94 each contribute to the hexadecanoate site.

Functionally, may bind long-chain fatty acids, such as palmitate, and may play a role in lipid transport or fatty acid metabolism. The chain is DegV domain-containing protein MG326 homolog from Mycoplasma pneumoniae (strain ATCC 29342 / M129 / Subtype 1) (Mycoplasmoides pneumoniae).